A 336-amino-acid chain; its full sequence is Holliday junction branch migration complex subunit RuvB (336 aa).

The segment at 4 to 184 (ADRLVSADSS…FGIVQRLEFY (181 aa)) is large ATPase domain (RuvB-L). ATP-binding positions include Ile23, Arg24, Gly65, Lys68, Thr69, Thr70, 131–133 (EDY), Arg174, Tyr184, and Arg221. Thr69 lines the Mg(2+) pocket. Residues 185–255 (QIPDLQHIVS…IAAQALDMLN (71 aa)) form a small ATPAse domain (RuvB-S) region. Residues 258 to 336 (AEGFDYMDRK…HFGITPPEMP (79 aa)) are head domain (RuvB-H). Residues Arg294, Arg313, and Arg318 each coordinate DNA.

It belongs to the RuvB family. As to quaternary structure, homohexamer. Forms an RuvA(8)-RuvB(12)-Holliday junction (HJ) complex. HJ DNA is sandwiched between 2 RuvA tetramers; dsDNA enters through RuvA and exits via RuvB. An RuvB hexamer assembles on each DNA strand where it exits the tetramer. Each RuvB hexamer is contacted by two RuvA subunits (via domain III) on 2 adjacent RuvB subunits; this complex drives branch migration. In the full resolvosome a probable DNA-RuvA(4)-RuvB(12)-RuvC(2) complex forms which resolves the HJ.

The protein resides in the cytoplasm. The catalysed reaction is ATP + H2O = ADP + phosphate + H(+). In terms of biological role, the RuvA-RuvB-RuvC complex processes Holliday junction (HJ) DNA during genetic recombination and DNA repair, while the RuvA-RuvB complex plays an important role in the rescue of blocked DNA replication forks via replication fork reversal (RFR). RuvA specifically binds to HJ cruciform DNA, conferring on it an open structure. The RuvB hexamer acts as an ATP-dependent pump, pulling dsDNA into and through the RuvAB complex. RuvB forms 2 homohexamers on either side of HJ DNA bound by 1 or 2 RuvA tetramers; 4 subunits per hexamer contact DNA at a time. Coordinated motions by a converter formed by DNA-disengaged RuvB subunits stimulates ATP hydrolysis and nucleotide exchange. Immobilization of the converter enables RuvB to convert the ATP-contained energy into a lever motion, pulling 2 nucleotides of DNA out of the RuvA tetramer per ATP hydrolyzed, thus driving DNA branch migration. The RuvB motors rotate together with the DNA substrate, which together with the progressing nucleotide cycle form the mechanistic basis for DNA recombination by continuous HJ branch migration. Branch migration allows RuvC to scan DNA until it finds its consensus sequence, where it cleaves and resolves cruciform DNA. This is Holliday junction branch migration complex subunit RuvB from Klebsiella pneumoniae (strain 342).